The following is a 257-amino-acid chain: MTKTLTNKLAKKDHAAVVTYIMGGDGGLDNLEEQLLFLEKSGVSAIEIGIPFSDPVADGPIIQLAGLRALKEQVSLEAILNKLARSKVQIPLIIMSYINPIFHLGIPKFVELVQKTPVKGLIIPDLPYEHQTLITPELQGTDIALIPLVSLTSPKERLEEIAKQAEGFIYAVTVNGTTGVRSEFDAHIDNHLAYLKSISPVPVLAGFGVSSIEHVEKFAHVCDGVIIGSKVVQMLHEEKTAELGAFLQKAAEVRIEN.

Catalysis depends on proton acceptor residues E47 and D58.

Belongs to the TrpA family. As to quaternary structure, tetramer of two alpha and two beta chains.

The catalysed reaction is (1S,2R)-1-C-(indol-3-yl)glycerol 3-phosphate + L-serine = D-glyceraldehyde 3-phosphate + L-tryptophan + H2O. Its pathway is amino-acid biosynthesis; L-tryptophan biosynthesis; L-tryptophan from chorismate: step 5/5. Functionally, the alpha subunit is responsible for the aldol cleavage of indoleglycerol phosphate to indole and glyceraldehyde 3-phosphate. The protein is Tryptophan synthase alpha chain of Listeria monocytogenes serotype 4b (strain F2365).